Reading from the N-terminus, the 284-residue chain is Steroidogenic acute regulatory protein, mitochondrial (284 aa).

A mitochondrion-targeting transit peptide spans 1–62 (MLLATFKLCA…RRSSLLGSQL (62 aa)). A phosphoserine; by PKA mark is found at Ser-56 and Ser-194. In terms of domain architecture, START spans 66–279 (LYSEQELSYI…LRKRLESSSA (214 aa)).

In terms of assembly, may interact with TSPO.

The protein resides in the mitochondrion. Its pathway is steroid metabolism; cholesterol metabolism. Its function is as follows. Plays a key role in steroid hormone synthesis by enhancing the metabolism of cholesterol into pregnenolone. Mediates the transfer of cholesterol from the outer mitochondrial membrane to the inner mitochondrial membrane where it is cleaved to pregnenolone. The polypeptide is Steroidogenic acute regulatory protein, mitochondrial (STAR) (Mesocricetus auratus (Golden hamster)).